The following is a 270-amino-acid chain: MAANVPLSDFLATAVDAAKRAGEVIRKGFYVKKNVEHKGQVDLVTETDKSCEDIIFNCLKQQYPNHKFIGEETTAAYGATELTDEPTWIVDPLDGTTNFVHGFPFVCVSIGLTIGKVPTVGVVYNPIMNELFTGVRRQGAFLNGVPIHVSSKDELVNCLLVTEVGTKRDKSTVDATTNRINGLLFKVRSIRMAGSCALDLCGIACGRADLMYENGYGGAWDVTAGIVIVEEAGGVIFDPSGKDFDITVTRIAASNPLIKDSFVEAFKQAE.

Residues Glu-71, Asp-91, Leu-93, and Asp-94 each contribute to the Mg(2+) site. Substrate is bound at residue Glu-71. Residues 93-96 (LDGT), 194-196 (GSC), Glu-213, and Asp-221 contribute to the substrate site. Asp-221 is a binding site for Mg(2+).

It belongs to the inositol monophosphatase superfamily. Mg(2+) serves as cofactor.

The catalysed reaction is a myo-inositol phosphate + H2O = myo-inositol + phosphate. The protein operates within polyol metabolism; myo-inositol biosynthesis; myo-inositol from D-glucose 6-phosphate: step 2/2. Its activity is regulated as follows. Inhibited by Li(+). Responsible for the provision of inositol required for synthesis of phosphatidylinositol and polyphosphoinositides. This Mesembryanthemum crystallinum (Common ice plant) protein is Inositol monophosphatase (IMP1).